The chain runs to 130 residues: Small ribosomal subunit protein uS8A (130 aa).

This sequence belongs to the universal ribosomal protein uS8 family.

The sequence is that of Small ribosomal subunit protein uS8A (RpS15Aa) from Drosophila melanogaster (Fruit fly).